Here is a 580-residue protein sequence, read N- to C-terminus: Arginine--tRNA ligase (580 aa).

Positions 123–133 (PNLAKEMHVGH) match the 'HIGH' region motif.

The protein belongs to the class-I aminoacyl-tRNA synthetase family. As to quaternary structure, monomer.

It localises to the cytoplasm. It catalyses the reaction tRNA(Arg) + L-arginine + ATP = L-arginyl-tRNA(Arg) + AMP + diphosphate. This chain is Arginine--tRNA ligase, found in Pseudoalteromonas translucida (strain TAC 125).